Consider the following 84-residue polypeptide: Conotoxin Am6.1 (84 aa).

The N-terminal stretch at 1–19 is a signal peptide; it reads MEKLTILLLVAAVLMSTHA. A propeptide spanning residues 20-47 is cleaved from the precursor; the sequence is MFQGGGEKSRKAINFSETRKLARNKQKR. 3 cysteine pairs are disulfide-bonded: Cys48/Cys62, Cys55/Cys66, and Cys61/Cys71. Position 51 is a 6'-bromotryptophan; in Am6.1b (Trp51). Glu60 and Glu64 each carry 4-carboxyglutamate; partial; in Am6.1b and Am6.1c. A propeptide spanning residues 78-84 is cleaved from the precursor; it reads RTTSHPI.

This sequence belongs to the conotoxin O2 family. In terms of processing, three forms of this peptides have been described. The unmodified Am6.1a (Am3286) is not detected in the venom; Am6.1b (Am3408) is only Trp brominated, while Am6.1c (Am3452) is both Trp brominated and Glu gamma-carboxyglutamated. Both Am6.1b and Am6.1c are detected in the venom. Expressed by the venom duct.

It is found in the secreted. Gamma-conotoxins may act on voltage-gated non-specific cation pacemaker channels (HCN). The sequence is that of Conotoxin Am6.1 from Conus amadis (Amadis cone).